The sequence spans 1642 residues: Cholesterol transporter ABCA5 (1642 aa).

Residues Ser32–Met52 traverse the membrane as a helical segment. Asn86 is a glycosylation site (N-linked (GlcNAc...) asparagine). A run of 6 helical transmembrane segments spans residues Val220–Ile240, Leu264–Ile284, Ile297–Leu317, Gly328–Ile348, Leu355–Met375, and Leu396–Tyr416. Asn458 is a glycosylation site (N-linked (GlcNAc...) asparagine). The region spanning Ile478–Tyr713 is the ABC transporter 1 domain. Gly514 to Ser521 contacts ATP. A run of 2 helical transmembrane segments spans residues Leu866 to Phe886 and Val967 to Ile987. N-linked (GlcNAc...) asparagine glycosylation occurs at Asn996. Transmembrane regions (helical) follow at residues Leu1021 to Met1041, Val1071 to Phe1091, Phe1102 to Ile1122, Phe1139 to Gly1159, Ala1169 to Ile1189, and Leu1207 to Tyr1227. Residues Lys1249–Val1268 are disordered. The span at Pro1259 to Val1268 shows a compositional bias: acidic residues. Positions Ile1290 to Lys1533 constitute an ABC transporter 2 domain. Gly1333–Ser1340 serves as a coordination point for ATP.

This sequence belongs to the ABC transporter superfamily. ABCA family. In terms of processing, N-glycosylated. As to expression, ubiquitously expressed. Highly expressed in testis, skeletal muscle, kidney, liver and placenta. Expressed in both the epithelial and mesenchymal compartments, present within the outer root sheath (ORS) of the hair follicle as well as dermal sheath. Expressed in multiple regions of the brain, including the hippocampus, superior frontal and inferior temporal cortices. Strongly expressed in neurons and moderately in microglia, with only weak expression in astrocytes and oligodendrocytes.

It is found in the golgi apparatus membrane. The protein localises to the lysosome membrane. Its subcellular location is the late endosome membrane. It localises to the cell membrane. It carries out the reaction cholesterol(in) + ATP + H2O = cholesterol(out) + ADP + phosphate + H(+). Its function is as follows. Cholesterol efflux transporter in macrophages that is responsible for APOAI/high-density lipoproteins (HDL) formation at the plasma membrane under high cholesterol levels and participates in reverse cholesterol transport. May play a role in the processing of autolysosomes. The sequence is that of Cholesterol transporter ABCA5 from Homo sapiens (Human).